A 179-amino-acid chain; its full sequence is UPF0227 protein Ssed_2836 (179 aa).

The protein belongs to the UPF0227 family.

This chain is UPF0227 protein Ssed_2836, found in Shewanella sediminis (strain HAW-EB3).